The sequence spans 611 residues: Muscarinic acetylcholine receptor gar-3 (611 aa).

Residues M1 to M67 lie on the Extracellular side of the membrane. N-linked (GlcNAc...) asparagine glycans are attached at residues N28 and N33. Residues I68 to V88 traverse the membrane as a helical segment. The Cytoplasmic portion of the chain corresponds to S89–N101. A helical transmembrane segment spans residues Y102–F122. Residues T123–F140 are Extracellular-facing. The cysteines at positions 138 and 218 are disulfide-linked. A helical membrane pass occupies residues W141 to F161. The Cytoplasmic segment spans residues D162–K181. Residues A182–I202 traverse the membrane as a helical segment. Topologically, residues S203–P227 are extracellular. The helical transmembrane segment at Y228–L248 threads the bilayer. Residues Y249–T525 lie on the Cytoplasmic side of the membrane. Disordered regions lie at residues R299–A364, S377–S432, S446–I477, and F500–E519. Low complexity predominate over residues S307–S317. Residues Q503–E519 are compositionally biased toward basic and acidic residues. Residues L526 to W546 form a helical membrane-spanning segment. Over E547–V557 the chain is Extracellular. A helical transmembrane segment spans residues L558 to A578. Topologically, residues L579–N611 are cytoplasmic.

Belongs to the G-protein coupled receptor 1 family. Muscarinic acetylcholine receptor subfamily.

It is found in the cell membrane. Its function is as follows. The muscarinic acetylcholine receptor mediates various cellular responses, including inhibition of adenylate cyclase, breakdown of phosphoinositides and modulation of potassium channels through the action of G proteins. Primary transducing effect is Pi turnover. Enhances the release of the neurotransmitter acetlycholine in cholinergic motor neurons, which in turn positively feeds back to depolarize body wall muscles and allows for the maintenance of normal body posture and locomotion. This chain is Muscarinic acetylcholine receptor gar-3 (gar-3), found in Caenorhabditis elegans.